The chain runs to 433 residues: Alpha-(1,3)-fucosyltransferase 4 (433 aa).

Topologically, residues 1 to 52 are cytoplasmic; the sequence is MAPARQELQHESRCRPSRTVDAWRAAVATRGRHMETPGYRRRTRCGGWGLPR. Residues 53–74 form a helical; Signal-anchor for type II membrane protein membrane-spanning segment; it reads SVSSLAAVGLLCTALTTFICWG. At 75–433 the chain is on the lumenal side; the sequence is QLPPLPWASP…IHNLADWFQR (359 aa). N-linked (GlcNAc...) asparagine glycosylation is found at Asn-117 and Asn-218.

Belongs to the glycosyltransferase 10 family. In terms of tissue distribution, highest expression in stomach and colon. It is also expressed in the lung, testis, uterus, small intestine and to a lesser extent in spleen, and ovary. Present in trace amounts in brain, thymus, heart, smooth muscle, kidney and bone marrow. Not found in liver, salivary gland and pancreas.

It is found in the golgi apparatus. Its subcellular location is the golgi stack membrane. It carries out the reaction a beta-D-galactosyl-(1-&gt;4)-N-acetyl-beta-D-glucosaminyl derivative + GDP-beta-L-fucose = a beta-D-galactosyl-(1-&gt;4)-[alpha-L-fucosyl-(1-&gt;3)]-N-acetyl-beta-D-glucosaminyl derivative + GDP + H(+). The catalysed reaction is an N-acetyl-alpha-neuraminyl-(2-&gt;3)-beta-D-galactosyl-(1-&gt;4)-N-acetyl-beta-D-glucosaminyl derivative + GDP-beta-L-fucose = an alpha-Neu5Ac-(2-&gt;3)-beta-D-Gal-(1-&gt;4)-[alpha-L-Fuc-(1-&gt;3)]-beta-D-GlcNAc derivative + GDP + H(+). The enzyme catalyses an alpha-Neu5Ac-(2-&gt;3)-beta-D-Gal-(1-&gt;4)-beta-D-GlcNAc-(1-&gt;3)-beta-D-Gal-(1-&gt;4)-beta-D-GlcNAc derivative + GDP-beta-L-fucose = an alpha-Neu5Ac-(2-&gt;3)-beta-D-Gal-(1-&gt;4)-beta-D-GlcNAc-(1-&gt;3)-beta-D-Gal-(1-&gt;4)-[alpha-L-Fuc-(1-&gt;3)]-beta-D-GlcNAc derivative + GDP + H(+). It catalyses the reaction an alpha-Neu5Ac-(2-&gt;3)-beta-D-Gal-(1-&gt;4)-beta-D-GlcNAc6S derivative + GDP-beta-L-fucose = an alpha-Neu5Ac-(2-&gt;3)-beta-D-Gal-(1-&gt;4)-[alpha-L-Fuc-(1-&gt;3)]-beta-D-GlcNAc6S derivative + GDP + H(+). It participates in protein modification; protein glycosylation. Its function is as follows. Catalyzes alpha(1-&gt;3) linkage of fucosyl moiety transferred from GDP-beta-L-fucose to N-acetyl glucosamine (GlcNAc) within type 2 lactosamine (LacNAc, Gal-beta(1-&gt;4)GlcNAc) glycan attached to N- or O-linked glycoproteins. Robustly fucosylates nonsialylated distal LacNAc unit of the polylactosamine chain to form Lewis X antigen (CD15), a glycan determinant known to mediate important cellular functions in development and immunity. Fucosylates with lower efficiency sialylated LacNAc acceptors to form sialyl Lewis X and 6-sulfo sialyl Lewis X determinants that serve as recognition epitopes for C-type lectins. Together with FUT7 contributes to SELE, SELL and SELP selectin ligand biosynthesis and selectin-dependent lymphocyte homing, leukocyte migration and blood leukocyte homeostasis. In a cell type specific manner, may also fucosylate the internal LacNAc unit of the polylactosamine chain to form VIM-2 antigen that serves as recognition epitope for SELE. The chain is Alpha-(1,3)-fucosyltransferase 4 (Fut4) from Mus musculus (Mouse).